A 303-amino-acid chain; its full sequence is Kynurenine formamidase (303 aa).

The HGGXW motif lies at 95–99 (HGGYW). The active-site Nucleophile is the Ser-164. Residues Asp-247 and His-279 contribute to the active site.

The protein belongs to the kynurenine formamidase family. In terms of assembly, homodimer.

The protein resides in the cytoplasm. Its subcellular location is the cytosol. It localises to the nucleus. The enzyme catalyses N-formyl-L-kynurenine + H2O = L-kynurenine + formate + H(+). The protein operates within amino-acid degradation; L-tryptophan degradation via kynurenine pathway; L-kynurenine from L-tryptophan: step 2/2. Functionally, catalyzes the hydrolysis of N-formyl-L-kynurenine to L-kynurenine, the second step in the kynurenine pathway of tryptophan degradation. Kynurenine may be further oxidized to nicotinic acid, NAD(H) and NADP(H). Required for elimination of toxic metabolites. In Homo sapiens (Human), this protein is Kynurenine formamidase.